The chain runs to 1517 residues: DNA-directed RNA polymerase subunit beta' (1517 aa).

The Zn(2+) site is built by C71, C73, C86, and C89. Residues D482, D484, and D486 each contribute to the Mg(2+) site. The Zn(2+) site is built by C812, C886, C893, and C896.

Belongs to the RNA polymerase beta' chain family. The RNAP catalytic core consists of 2 alpha, 1 beta, 1 beta' and 1 omega subunit. When a sigma factor is associated with the core the holoenzyme is formed, which can initiate transcription. The cofactor is Mg(2+). It depends on Zn(2+) as a cofactor.

It catalyses the reaction RNA(n) + a ribonucleoside 5'-triphosphate = RNA(n+1) + diphosphate. In terms of biological role, DNA-dependent RNA polymerase catalyzes the transcription of DNA into RNA using the four ribonucleoside triphosphates as substrates. The chain is DNA-directed RNA polymerase subunit beta' from Campylobacter jejuni subsp. jejuni serotype O:6 (strain 81116 / NCTC 11828).